The chain runs to 314 residues: Cathepsin L 1 (314 aa).

A signal peptide spans Met-1 to Asn-24. Positions Leu-25–Lys-109 are cleaved as a propeptide — activation peptide. Cystine bridges form between Cys-132/Cys-175, Cys-166/Cys-207, and Cys-259/Cys-302. The active site involves Cys-135. Active-site residues include His-265 and Asn-282.

This sequence belongs to the peptidase C1 family.

The protein resides in the secreted. It carries out the reaction Specificity close to that of papain. As compared to cathepsin B, cathepsin L exhibits higher activity toward protein substrates, but has little activity on Z-Arg-Arg-NHMec, and no peptidyl-dipeptidase activity.. May be involved in extracellular digestion. The polypeptide is Cathepsin L 1 (Paramecium tetraurelia).